The chain runs to 301 residues: MNGTLTHLQQLEAESIHIIREVVAEFANPVMLYSIGKDSAVMLHLARKAFFPAPPPFPLLHVDTTWKFREMIQFRDRMAAECGLDLIVHVNEEGVKNGISPFTHGSALYTDVMKTEGLKQALDKYKFDAAFGGARRDEEKSRAKERIFSFRCTNHRWDPKNQRPELWNLYNTRIKPGESIRVFPLSNWTELDVWQYIHLENIPIVPLYYAAVRPVVERDGMLIMVDDERLELKPGEKVQYKSVRFRTLGCYPLTGAVESTADTLPQIIQEMLLTRTSERQGRLIDHDQDGSMEKKKQEGYF.

Positions Arg-279–Phe-301 are disordered.

The protein belongs to the PAPS reductase family. CysD subfamily. Heterodimer composed of CysD, the smaller subunit, and CysN.

The enzyme catalyses sulfate + ATP + H(+) = adenosine 5'-phosphosulfate + diphosphate. It functions in the pathway sulfur metabolism; hydrogen sulfide biosynthesis; sulfite from sulfate: step 1/3. In terms of biological role, with CysN forms the ATP sulfurylase (ATPS) that catalyzes the adenylation of sulfate producing adenosine 5'-phosphosulfate (APS) and diphosphate, the first enzymatic step in sulfur assimilation pathway. APS synthesis involves the formation of a high-energy phosphoric-sulfuric acid anhydride bond driven by GTP hydrolysis by CysN coupled to ATP hydrolysis by CysD. This is Sulfate adenylyltransferase subunit 2 from Geotalea uraniireducens (strain Rf4) (Geobacter uraniireducens).